The sequence spans 298 residues: Glycine--tRNA ligase alpha subunit (298 aa).

Belongs to the class-II aminoacyl-tRNA synthetase family. As to quaternary structure, tetramer of two alpha and two beta subunits.

The protein localises to the cytoplasm. The enzyme catalyses tRNA(Gly) + glycine + ATP = glycyl-tRNA(Gly) + AMP + diphosphate. The polypeptide is Glycine--tRNA ligase alpha subunit (glyQ) (Helicobacter pylori (strain J99 / ATCC 700824) (Campylobacter pylori J99)).